The primary structure comprises 669 residues: DNA ligase (669 aa).

Residues 34 to 38 (DAEYD), 83 to 84 (SL), and glutamate 114 contribute to the NAD(+) site. Lysine 116 serves as the catalytic N6-AMP-lysine intermediate. 4 residues coordinate NAD(+): arginine 137, glutamate 171, lysine 287, and lysine 311. Zn(2+)-binding residues include cysteine 405, cysteine 408, cysteine 423, and cysteine 428. A BRCT domain is found at 591 to 669 (NVESYFAGKT…EERFLQELNK (79 aa)).

It belongs to the NAD-dependent DNA ligase family. LigA subfamily. It depends on Mg(2+) as a cofactor. Requires Mn(2+) as cofactor.

It catalyses the reaction NAD(+) + (deoxyribonucleotide)n-3'-hydroxyl + 5'-phospho-(deoxyribonucleotide)m = (deoxyribonucleotide)n+m + AMP + beta-nicotinamide D-nucleotide.. Functionally, DNA ligase that catalyzes the formation of phosphodiester linkages between 5'-phosphoryl and 3'-hydroxyl groups in double-stranded DNA using NAD as a coenzyme and as the energy source for the reaction. It is essential for DNA replication and repair of damaged DNA. The polypeptide is DNA ligase (Bacillus cereus (strain ATCC 10987 / NRS 248)).